The chain runs to 221 residues: Protein myomaker (221 aa).

Topologically, residues 1–3 (MGT) are extracellular. The helical transmembrane segment at 4–24 (LVAKLLLPTLSSLAFLPTVSI) threads the bilayer. The Cytoplasmic portion of the chain corresponds to 25-34 (AAKRRFHMEA). Residues 35-55 (MVYLFTLFFVALHHACNGPGL) form a helical membrane-spanning segment. At 56–64 (SVLCFMRHD) the chain is on the extracellular side. A helical membrane pass occupies residues 65–85 (ILEYFSVYGTALSMWVSLMAL). Residues 86-92 (ADFDEPK) lie on the Cytoplasmic side of the membrane. Residues 93-110 (RSTFVMFGVLTIAVRIYH) form a helical membrane-spanning segment. The Extracellular portion of the chain corresponds to 111-113 (DRW). The helical transmembrane segment at 114–134 (GYGVYSGPIGTAILIIAAKWL) threads the bilayer. Over 135–153 (QKMKEKKGLYPDKSVYTQQ) the chain is Cytoplasmic. Residues 154–174 (IGPGLCFGALALMLRFFFEDW) form a helical membrane-spanning segment. Asp175 is a topological domain (extracellular). Residues 176–196 (YTYVHSFYHCALAMSFVLLLP) traverse the membrane as a helical segment. At 197 to 221 (KVNKKAGSPGTPAKLDCSTLCCACV) the chain is on the cytoplasmic side. S-palmitoyl cysteine attachment occurs at residues Cys217 and Cys218.

Belongs to the TMEM8 family. As to quaternary structure, interacts with MYMX. Palmitoylated at the C-terminus; palmitoylation promotes localization to the Golgi apparatus.

It localises to the cell membrane. The protein localises to the golgi apparatus membrane. Functionally, myoblast-specific protein that mediates myoblast fusion, an essential step for the formation of multi-nucleated muscle fibers. Actively participates in the membrane fusion reaction by mediating the mixing of cell membrane lipids (hemifusion) upstream of MYMX. Acts independently of MYMX. Involved in skeletal muscle regeneration in response to injury by mediating the fusion of satellite cells, a population of muscle stem cells, with injured myofibers. Also involved in skeletal muscle hypertrophy, probably by mediating the fusion of satellite cells with myofibers. This Homo sapiens (Human) protein is Protein myomaker.